Reading from the N-terminus, the 191-residue chain is Thymidylate kinase (191 aa).

Glycine 7–serine 14 provides a ligand contact to ATP.

The protein belongs to the thymidylate kinase family.

It catalyses the reaction dTMP + ATP = dTDP + ADP. Functionally, phosphorylation of dTMP to form dTDP in both de novo and salvage pathways of dTTP synthesis. The protein is Thymidylate kinase of Helicobacter acinonychis (strain Sheeba).